Here is a 144-residue protein sequence, read N- to C-terminus: D-aminoacyl-tRNA deacylase (144 aa).

Positions Gly-136–Pro-137 match the Gly-cisPro motif, important for rejection of L-amino acids motif.

This sequence belongs to the DTD family. In terms of assembly, homodimer.

The protein resides in the cytoplasm. The enzyme catalyses glycyl-tRNA(Ala) + H2O = tRNA(Ala) + glycine + H(+). It catalyses the reaction a D-aminoacyl-tRNA + H2O = a tRNA + a D-alpha-amino acid + H(+). In terms of biological role, an aminoacyl-tRNA editing enzyme that deacylates mischarged D-aminoacyl-tRNAs. Also deacylates mischarged glycyl-tRNA(Ala), protecting cells against glycine mischarging by AlaRS. Acts via tRNA-based rather than protein-based catalysis; rejects L-amino acids rather than detecting D-amino acids in the active site. By recycling D-aminoacyl-tRNA to D-amino acids and free tRNA molecules, this enzyme counteracts the toxicity associated with the formation of D-aminoacyl-tRNA entities in vivo and helps enforce protein L-homochirality. The protein is D-aminoacyl-tRNA deacylase of Vibrio atlanticus (strain LGP32) (Vibrio splendidus (strain Mel32)).